A 163-amino-acid chain; its full sequence is NADH-quinone oxidoreductase subunit I (163 aa).

4Fe-4S ferredoxin-type domains follow at residues 53-83 and 94-123; these read LRRY…IEAG and VRYD…EGPN. Residues Cys-63, Cys-66, Cys-69, Cys-73, Cys-103, Cys-106, Cys-109, and Cys-113 each contribute to the [4Fe-4S] cluster site.

It belongs to the complex I 23 kDa subunit family. In terms of assembly, NDH-1 is composed of 14 different subunits. Subunits NuoA, H, J, K, L, M, N constitute the membrane sector of the complex. [4Fe-4S] cluster serves as cofactor.

The protein localises to the cell inner membrane. The enzyme catalyses a quinone + NADH + 5 H(+)(in) = a quinol + NAD(+) + 4 H(+)(out). In terms of biological role, NDH-1 shuttles electrons from NADH, via FMN and iron-sulfur (Fe-S) centers, to quinones in the respiratory chain. The immediate electron acceptor for the enzyme in this species is believed to be ubiquinone. Couples the redox reaction to proton translocation (for every two electrons transferred, four hydrogen ions are translocated across the cytoplasmic membrane), and thus conserves the redox energy in a proton gradient. The protein is NADH-quinone oxidoreductase subunit I of Allorhizobium ampelinum (strain ATCC BAA-846 / DSM 112012 / S4) (Agrobacterium vitis (strain S4)).